Consider the following 251-residue polypeptide: MQYQVDTHTHTVASTHAYSTIHDYLAVAKQKGILLFATTDHGPAMADAPHFWHFVNLRVLPRMVDGVGILRGIEANIKNIDGEIDFFGDYLKQLDIVLAGFHEPVYPPSDKATHTEAMINTIKSGKVDIITHPGNPAYPIDIDAVARAAAEYGVALEINNSSFEVSRKGSEANCTAIAKAAKEFGTILVMGSDSHVAFSLGGFERALAIIDAAGYPKSQLLNRSPSVLLGFLAQRGHHTVADLQALFDEAV.

H8, H10, H16, H41, E74, H102, H132, D193, and H195 together coordinate Zn(2+).

The protein belongs to the PHP family. Zn(2+) is required as a cofactor.

The polypeptide is Probable phosphatase Sputcn32_1369 (Shewanella putrefaciens (strain CN-32 / ATCC BAA-453)).